A 172-amino-acid chain; its full sequence is Ribosome maturation factor RimM (172 aa).

In terms of domain architecture, PRC barrel spans 92 to 167 (ENEFYHSDLV…VILKLPEIIG (76 aa)).

This sequence belongs to the RimM family. In terms of assembly, binds ribosomal protein uS19.

It is found in the cytoplasm. An accessory protein needed during the final step in the assembly of 30S ribosomal subunit, possibly for assembly of the head region. Essential for efficient processing of 16S rRNA. May be needed both before and after RbfA during the maturation of 16S rRNA. It has affinity for free ribosomal 30S subunits but not for 70S ribosomes. This Ehrlichia ruminantium (strain Gardel) protein is Ribosome maturation factor RimM.